The following is a 241-amino-acid chain: ATP synthase subunit a (241 aa).

5 helical membrane passes run 30-50 (GQVF…VLVG), 89-109 (LPFI…GALI), 128-148 (INTT…AGLS), 193-213 (LAVG…VMLL), and 214-234 (GLFT…FYIG).

It belongs to the ATPase A chain family. As to quaternary structure, F-type ATPases have 2 components, CF(1) - the catalytic core - and CF(0) - the membrane proton channel. CF(1) has five subunits: alpha(3), beta(3), gamma(1), delta(1), epsilon(1). CF(0) has four main subunits: a, b, b' and c.

The protein localises to the cellular thylakoid membrane. Functionally, key component of the proton channel; it plays a direct role in the translocation of protons across the membrane. This chain is ATP synthase subunit a, found in Synechococcus sp. (strain CC9902).